The primary structure comprises 298 residues: ATP phosphoribosyltransferase (298 aa).

This sequence belongs to the ATP phosphoribosyltransferase family. Long subfamily. Mg(2+) is required as a cofactor.

It localises to the cytoplasm. It catalyses the reaction 1-(5-phospho-beta-D-ribosyl)-ATP + diphosphate = 5-phospho-alpha-D-ribose 1-diphosphate + ATP. The protein operates within amino-acid biosynthesis; L-histidine biosynthesis; L-histidine from 5-phospho-alpha-D-ribose 1-diphosphate: step 1/9. Feedback inhibited by histidine. Functionally, catalyzes the condensation of ATP and 5-phosphoribose 1-diphosphate to form N'-(5'-phosphoribosyl)-ATP (PR-ATP). Has a crucial role in the pathway because the rate of histidine biosynthesis seems to be controlled primarily by regulation of HisG enzymatic activity. This chain is ATP phosphoribosyltransferase, found in Vibrio parahaemolyticus serotype O3:K6 (strain RIMD 2210633).